Consider the following 249-residue polypeptide: CDP-diacylglycerol pyrophosphatase (249 aa).

Residues 7-27 (FLLAVVIVAAVAGIGYWKLAA) traverse the membrane as a helical segment.

Belongs to the Cdh family.

Its subcellular location is the cell inner membrane. It catalyses the reaction a CDP-1,2-diacyl-sn-glycerol + H2O = a 1,2-diacyl-sn-glycero-3-phosphate + CMP + 2 H(+). The protein operates within phospholipid metabolism; CDP-diacylglycerol degradation; phosphatidate from CDP-diacylglycerol: step 1/1. The polypeptide is CDP-diacylglycerol pyrophosphatase (Citrobacter koseri (strain ATCC BAA-895 / CDC 4225-83 / SGSC4696)).